Reading from the N-terminus, the 781-residue chain is MAP7 domain-containing protein 2 (781 aa).

Over residues 1–32 (MERSGGNGGGGGGGGGGGGGYGGSGGGGGGAG) the composition is skewed to gly residues. Disordered regions lie at residues 1–37 (MERS…PSEG), 50–87 (AEAA…REER), 120–567 (LEEQ…AAKQ), and 597–628 (TRKS…ANKA). Basic and acidic residues-rich tracts occupy residues 71–87 (LKSD…REER) and 120–158 (LEEQ…RSLE). Residues 73–168 (SDERQRLAKE…RTQQLELKKK (96 aa)) are a coiled coil. A compositionally biased stretch (low complexity) spans 192–210 (LTLATSTPPLDTGTTTAAA). Polar residues-rich tracts occupy residues 211–245 (ESTN…TVAI) and 257–267 (LKSSYKSSPTR). Residues 318 to 328 (RRCEPPEDISK) are compositionally biased toward basic and acidic residues. Over residues 329-348 (RLSSPVKSKITSKTYPQSPK) the composition is skewed to polar residues. Composition is skewed to basic and acidic residues over residues 370–387 (ETPK…EKEG), 397–436 (PREE…EHSA), 453–567 (LAEK…AAKQ), and 597–613 (TRKS…DPKV).

Belongs to the MAP7 family. In terms of assembly, interacts (via N-terminus) with microtubules; facilitates microtubule stabilization. Interacts with kinesin-1 family members, KIF5A, KIF5B and KIF5C. In terms of tissue distribution, expressed predominantly in the glomerular layer of the olfactory bulb and Sertoli cells of the testis.

The protein resides in the cytoplasm. The protein localises to the cytoskeleton. It localises to the microtubule organizing center. Its subcellular location is the centrosome. It is found in the midbody. The protein resides in the cell projection. The protein localises to the neuron projection. It localises to the axon. Functionally, microtubule-stabilizing protein involved in the control of cell motility and neurite outgrowth. Acts as a critical cofactor for kinesin transport; in the proximal axon regulates kinesin-1 family members, KIF5A, KIF5B and KIF5C recruitment to microtubules and contributes to kinesin-1-mediated transport in the axons. The protein is MAP7 domain-containing protein 2 (Map7d2) of Mus musculus (Mouse).